The sequence spans 300 residues: Probable membrane transporter protein YtnM (300 aa).

A run of 8 helical transmembrane segments spans residues 4–24, 33–53, 76–96, 102–122, 139–159, 206–226, 231–251, and 260–280; these read LIVFAFIGLLSQLIDGSLGMA, LLAFGITPAVASASVHLAEVV, LVIPGSIGAFLGAAFLSQLPG, YISLFLLLLGGYVLIRFLFQY, IPLGVIAGFADATGGGGWGPV, LWVFSLMAGGIIAAPIAAWLV, PQLMGVLVGGFIILVNARTLI, and VHPLIYTAIGAIWLSAVLFVL.

It belongs to the 4-toluene sulfonate uptake permease (TSUP) (TC 2.A.102) family.

Its subcellular location is the cell membrane. In Bacillus subtilis (strain 168), this protein is Probable membrane transporter protein YtnM (ytnM).